Reading from the N-terminus, the 70-residue chain is Peptide BmKn1 (70 aa).

The first 23 residues, 1–23, serve as a signal peptide directing secretion; it reads MKSQTFFLLFLVVLLLAISQSEA. Phe-36 carries the post-translational modification Phenylalanine amide. Positions 40-70 are excised as a propeptide; that stretch reads SMRDMDTMKYLYDPSLSAADLKTLQKLMENY.

Belongs to the non-disulfide-bridged peptide (NDBP) superfamily. Short antimicrobial peptide (group 4) family. Expressed by the venom gland.

It localises to the secreted. The protein localises to the target cell membrane. Functionally, antibacterial peptide. This Olivierus martensii (Manchurian scorpion) protein is Peptide BmKn1.